Reading from the N-terminus, the 209-residue chain is FMN-dependent NADH:quinone oxidoreductase 2 (209 aa).

An FMN-binding site is contributed by Ser-17–Ser-19.

The protein belongs to the azoreductase type 1 family. As to quaternary structure, homodimer. The cofactor is FMN.

It carries out the reaction 2 a quinone + NADH + H(+) = 2 a 1,4-benzosemiquinone + NAD(+). It catalyses the reaction N,N-dimethyl-1,4-phenylenediamine + anthranilate + 2 NAD(+) = 2-(4-dimethylaminophenyl)diazenylbenzoate + 2 NADH + 2 H(+). Its function is as follows. Quinone reductase that provides resistance to thiol-specific stress caused by electrophilic quinones. Functionally, also exhibits azoreductase activity. Catalyzes the reductive cleavage of the azo bond in aromatic azo compounds to the corresponding amines. This Lactiplantibacillus plantarum (strain ATCC BAA-793 / NCIMB 8826 / WCFS1) (Lactobacillus plantarum) protein is FMN-dependent NADH:quinone oxidoreductase 2.